Reading from the N-terminus, the 231-residue chain is MAVFLEAKNAHAVLKRFPRANEFLEELRQGTIERECMEEICSYEEVKEVFENKEKTMEFWKGYPNAVYSVRDPSQSSDAMYVVVPLLGVVLLIVIALFIIWRCQLQKATRHHPSYAQNRYLASRAGHNLPRVMVYRGTVHSQGESSGHREAGNNPQIVMGPSRGGRTTVRLESTLYLPELSLSRLSSATPPPSYEEVTAPQEGSSEEASVSYSDPPPKYEEIVAASPSADK.

Positions Met-1–Arg-19 are excised as a propeptide. The region spanning Ala-20–Asn-65 is the Gla domain. Residues Ala-20–Asp-78 are Extracellular-facing. Residues Glu-22, Glu-25, Glu-26, Glu-33, Glu-35, Glu-38, Glu-39, Glu-44, Glu-45, Glu-48, Glu-51, Glu-54, and Glu-58 each carry the 4-carboxyglutamate modification. Cys-36 and Cys-41 are joined by a disulfide. Residues Ala-79 to Trp-101 form a helical membrane-spanning segment. Over Arg-102 to Lys-231 the chain is Cytoplasmic. 2 disordered regions span residues His-140–Gly-165 and Arg-184–Lys-231. Positions Gln-201–Tyr-212 are enriched in polar residues.

Post-translationally, gla residues are produced after subsequent post-translational modifications of glutamate by a vitamin K-dependent gamma-carboxylase.

Its subcellular location is the membrane. In Mus musculus (Mouse), this protein is Transmembrane gamma-carboxyglutamic acid protein 3 (Prrg3).